The following is a 319-amino-acid chain: Inositol phosphoceramide mannosyltransferase 1 (319 aa).

The helical transmembrane segment at 8–28 (LLLKGIPICGVILLILWGYSL) threads the bilayer. N-linked (GlcNAc...) asparagine glycans are attached at residues N115 and N198. 2 helical membrane passes run 211 to 231 (PTVFLSAGPLFLSYQFCKYLL) and 279 to 299 (VLFFAFLAAFAILFLCLRVVF).

This sequence belongs to the glycosyltransferase 32 family.

It is found in the golgi apparatus. The protein localises to the cis-Golgi network membrane. The protein resides in the trans-Golgi network membrane. Functionally, with imt2 and imt3, is required for the synthesis of mannosyl phosphorylinositol ceramide (MIPC). Catalyzes the addition of mannosyl to phosphorylinositol ceramide (IPC). MIPC is essential for cell morphology, cell-surface distribution of ergosterol, localization for plasma-membrane transporters, and lipid-raft-mediated endocytosis of plasma membrane proteins to the vacuole. In Schizosaccharomyces pombe (strain 972 / ATCC 24843) (Fission yeast), this protein is Inositol phosphoceramide mannosyltransferase 1 (imt1).